We begin with the raw amino-acid sequence, 107 residues long: Magnetosome protein MmsF (107 aa).

At 1–13 (MTEAILRSTLGAR) the chain is on the cytoplasmic side. A helical membrane pass occupies residues 14–34 (TTVMAALSYLSVLCFVPLLVD). Over 35-46 (RDDEFVYFHAKQ) the chain is Lumenal. Residues 47-67 (GLVIWMWGVLALFALHVPVLG) form a helical membrane-spanning segment. Residues 68-69 (KW) lie on the Cytoplasmic side of the membrane. The helical transmembrane segment at 70–90 (IFGFSSMGVLVFSLLGLVSVV) threads the bilayer. Over 91–107 (FQRAWKLPLISWVAHRI) the chain is Lumenal.

This sequence belongs to the magnetosome MamF/MmsF protein family. In terms of assembly, may oligomerize.

It is found in the magnetosome membrane. With respect to regulation, its function may be negatively regulated by one of the MamGFDC proteins. Functionally, plays a major role in synthesis of cubooctahedral magnetite crystals by controlling crystal growth and morphology after nucleation. Has a partially redundant function with MamF. When overexpressed in E.coli the soluble protein self assembles into shells of about 36 nm. This protein mediates the formation of magnetite nanoparticles from a solution of Fe(2+) and Fe(3+) sulfate; the crystals are larger and lack alternative iron oxide/oxyhydroxide species seen in the protein's absence. The sequence is that of Magnetosome protein MmsF from Paramagnetospirillum magneticum (strain ATCC 700264 / AMB-1) (Magnetospirillum magneticum).